A 342-amino-acid polypeptide reads, in one-letter code: MQAVDNLTSAPGNTSLCTRDYKITQVLFPLLYTVLFFVGLITNGLAMRIFFQIRSKSNFIIFLKNTVISDLLMILTFPFKILSDAKLGTGPLRTFVCQVTSVIFYFTMYISISFLGLITIDRYQKTTRPFKTSNPKNLLGAKILSVVIWAFMFLLSLPNMILTNRQPRDKNVKKCSFLKSEFGLVWHEIVNYICQVIFWINFLIVIVCYTLITKELYRSYVRTRGVGKVPRKKVNVKVFIIIAVFFICFVPFHFARIPYTLSQTRDVFDCTAENTLFYVKESTLWLTSLNACLDPFIYFFLCKSFRNSLISMLKCPNSATSLSQDNRKKEQDGGDPNEETPM.

Topologically, residues 1–27 (MQAVDNLTSAPGNTSLCTRDYKITQVL) are extracellular. Residues Asn6 and Asn13 are each glycosylated (N-linked (GlcNAc...) asparagine). 2 cysteine pairs are disulfide-bonded: Cys17/Cys270 and Cys97/Cys175. A helical transmembrane segment spans residues 28–50 (FPLLYTVLFFVGLITNGLAMRIF). Residues 51-61 (FQIRSKSNFII) are Cytoplasmic-facing. Residues Ser55 and Ser57 each carry the phosphoserine modification. A helical membrane pass occupies residues 62–82 (FLKNTVISDLLMILTFPFKIL). The Extracellular portion of the chain corresponds to 83–97 (SDAKLGTGPLRTFVC). The ADP site is built by Arg93, Cys97, and Tyr105. Residues 98–118 (QVTSVIFYFTMYISISFLGLI) form a helical membrane-spanning segment. At 119 to 142 (TIDRYQKTTRPFKTSNPKNLLGAK) the chain is on the cytoplasmic side. The helical transmembrane segment at 143-162 (ILSVVIWAFMFLLSLPNMIL) threads the bilayer. ADP-binding positions include 156-159 (SLPN), 175-179 (CSFLK), His187, and Asn191. Over 163–185 (TNRQPRDKNVKKCSFLKSEFGLV) the chain is Extracellular. The helical transmembrane segment at 186-207 (WHEIVNYICQVIFWINFLIVIV) threads the bilayer. At 208-233 (CYTLITKELYRSYVRTRGVGKVPRKK) the chain is on the cytoplasmic side. A helical membrane pass occupies residues 234–259 (VNVKVFIIIAVFFICFVPFHFARIPY). ADP is bound by residues 256–259 (RIPY), Gln263, and Lys280. The Extracellular segment spans residues 260–278 (TLSQTRDVFDCTAENTLFY). A helical transmembrane segment spans residues 279–298 (VKESTLWLTSLNACLDPFIY). Topologically, residues 299-342 (FFLCKSFRNSLISMLKCPNSATSLSQDNRKKEQDGGDPNEETPM) are cytoplasmic. The tract at residues 319–342 (ATSLSQDNRKKEQDGGDPNEETPM) is disordered. Positions 333-342 (GGDPNEETPM) are enriched in acidic residues.

Belongs to the G-protein coupled receptor 1 family. Highly expressed in the platelets, lower levels in the brain. Lowest levels in the lung, appendix, pituitary and adrenal gland. Expressed in the spinal cord and in the fetal brain.

It localises to the cell membrane. Functionally, receptor for ADP and ATP coupled to G-proteins that inhibit the adenylyl cyclase second messenger system. Not activated by UDP and UTP. Required for normal platelet aggregation and blood coagulation. This is P2Y purinoceptor 12 (P2RY12) from Homo sapiens (Human).